The following is a 236-amino-acid chain: Leucyl/phenylalanyl-tRNA--protein transferase (236 aa).

It belongs to the L/F-transferase family.

It localises to the cytoplasm. The catalysed reaction is N-terminal L-lysyl-[protein] + L-leucyl-tRNA(Leu) = N-terminal L-leucyl-L-lysyl-[protein] + tRNA(Leu) + H(+). The enzyme catalyses N-terminal L-arginyl-[protein] + L-leucyl-tRNA(Leu) = N-terminal L-leucyl-L-arginyl-[protein] + tRNA(Leu) + H(+). It carries out the reaction L-phenylalanyl-tRNA(Phe) + an N-terminal L-alpha-aminoacyl-[protein] = an N-terminal L-phenylalanyl-L-alpha-aminoacyl-[protein] + tRNA(Phe). Its function is as follows. Functions in the N-end rule pathway of protein degradation where it conjugates Leu, Phe and, less efficiently, Met from aminoacyl-tRNAs to the N-termini of proteins containing an N-terminal arginine or lysine. The chain is Leucyl/phenylalanyl-tRNA--protein transferase from Vibrio atlanticus (strain LGP32) (Vibrio splendidus (strain Mel32)).